The primary structure comprises 125 residues: Large ribosomal subunit protein uL22c (125 aa).

The protein belongs to the universal ribosomal protein uL22 family. As to quaternary structure, part of the 50S ribosomal subunit.

The protein resides in the plastid. It is found in the chloroplast. Its function is as follows. This protein binds specifically to 23S rRNA. In terms of biological role, the globular domain of the protein is located near the polypeptide exit tunnel on the outside of the subunit, while an extended beta-hairpin is found that lines the wall of the exit tunnel in the center of the 70S ribosome. This chain is Large ribosomal subunit protein uL22c (rpl22), found in Nymphaea alba (White water-lily).